The following is a 343-amino-acid chain: Dihydroorotase (343 aa).

Zn(2+) is bound by residues His-13 and His-15. Substrate contacts are provided by residues 15–17 (HLR) and Asn-41. Residues Lys-99, His-136, and His-174 each coordinate Zn(2+). Position 99 is an N6-carboxylysine (Lys-99). Residue His-136 coordinates substrate. Leu-219 lines the substrate pocket. Asp-247 serves as a coordination point for Zn(2+). Residue Asp-247 is part of the active site. Residues His-251 and Ala-263 each contribute to the substrate site.

The protein belongs to the metallo-dependent hydrolases superfamily. DHOase family. Class II DHOase subfamily. As to quaternary structure, homodimer. Zn(2+) is required as a cofactor.

It catalyses the reaction (S)-dihydroorotate + H2O = N-carbamoyl-L-aspartate + H(+). It participates in pyrimidine metabolism; UMP biosynthesis via de novo pathway; (S)-dihydroorotate from bicarbonate: step 3/3. Catalyzes the reversible cyclization of carbamoyl aspartate to dihydroorotate. In Shewanella baltica (strain OS155 / ATCC BAA-1091), this protein is Dihydroorotase.